A 483-amino-acid polypeptide reads, in one-letter code: tRNA-2-methylthio-N(6)-dimethylallyladenosine synthase (483 aa).

The MTTase N-terminal domain maps to 31 to 148; it reads KKLYIETQGC…LPQMLDQHQD (118 aa). [4Fe-4S] cluster-binding residues include C40, C77, C111, C192, C196, and C199. The Radical SAM core domain occupies 178–410; that stretch reads RVEGFKAFVS…QHWIKQSSIR (233 aa). The TRAM domain maps to 413–477; sequence DAMQGTIQRV…LNLVYGELLN (65 aa).

The protein belongs to the methylthiotransferase family. MiaB subfamily. In terms of assembly, monomer. [4Fe-4S] cluster serves as cofactor.

It is found in the cytoplasm. The catalysed reaction is N(6)-dimethylallyladenosine(37) in tRNA + (sulfur carrier)-SH + AH2 + 2 S-adenosyl-L-methionine = 2-methylsulfanyl-N(6)-dimethylallyladenosine(37) in tRNA + (sulfur carrier)-H + 5'-deoxyadenosine + L-methionine + A + S-adenosyl-L-homocysteine + 2 H(+). Its function is as follows. Catalyzes the methylthiolation of N6-(dimethylallyl)adenosine (i(6)A), leading to the formation of 2-methylthio-N6-(dimethylallyl)adenosine (ms(2)i(6)A) at position 37 in tRNAs that read codons beginning with uridine. The chain is tRNA-2-methylthio-N(6)-dimethylallyladenosine synthase from Acinetobacter baylyi (strain ATCC 33305 / BD413 / ADP1).